The primary structure comprises 396 residues: MTTNTVSRKVAWLRVVTLAVAAFIFNTTEFVPVGLLSDIAQSFHMQTAQVGIMLTIYAWVVALMSLPFMLMTSQVERRKLLICLFVVFIASHVLSFLSWSFTVLVISRIGVAFAHAIFWSITASLAIRMAPAGKRAQALSLIATGTALAMVLGLPLGRIVGQYFGWRMTFFAIGIGALITLLCLIKLLPLLPSEHSGSLKSLPLLFRRPALMSIYLLTVVVVTAHYTAYSYIEPFVQNIAGFSANFATALLLLLGGAGIIGSVIFGKLGNQYASALVSTAIALLLVCLALLLPAANSEIHLGVLSIFWGIAMMIIGLGMQVKVLALAPDATDVAMALFSGIFNIGIGAGALVGNQVSLHWSMSMIGYVGTVPAFAALIWSIIIFRRWPVTLEEQTQ.

At methionine 1–arginine 14 the chain is on the cytoplasmic side. The chain crosses the membrane as a helical span at residues valine 15–leucine 35. The Periplasmic portion of the chain corresponds to leucine 36 to glutamine 49. The helical transmembrane segment at valine 50 to leucine 70 threads the bilayer. Over methionine 71–leucine 80 the chain is Cytoplasmic. A helical transmembrane segment spans residues leucine 81–phenylalanine 101. Position 102 (threonine 102) is a topological domain, periplasmic. A helical transmembrane segment spans residues valine 103–alanine 123. Over serine 124 to arginine 135 the chain is Cytoplasmic. The chain crosses the membrane as a helical span at residues alanine 136–leucine 156. At glycine 157–threonine 169 the chain is on the periplasmic side. The chain crosses the membrane as a helical span at residues phenylalanine 170–leucine 190. Over leucine 191–arginine 208 the chain is Cytoplasmic. The helical transmembrane segment at proline 209–tyrosine 229 threads the bilayer. The Periplasmic portion of the chain corresponds to serine 230–asparagine 245. The helical transmembrane segment at phenylalanine 246–glycine 266 threads the bilayer. Residues lysine 267 to serine 274 lie on the Cytoplasmic side of the membrane. A helical membrane pass occupies residues alanine 275–alanine 295. Residues asparagine 296 to glutamate 298 lie on the Periplasmic side of the membrane. Residues isoleucine 299–methionine 319 traverse the membrane as a helical segment. The Cytoplasmic segment spans residues glutamine 320–aspartate 332. The chain crosses the membrane as a helical span at residues valine 333–glycine 353. Residues asparagine 354–serine 363 lie on the Periplasmic side of the membrane. A helical transmembrane segment spans residues methionine 364 to phenylalanine 384. Residues arginine 385–glutamine 396 lie on the Cytoplasmic side of the membrane.

Belongs to the major facilitator superfamily. SotB (TC 2.A.1.2) family.

The protein localises to the cell inner membrane. Its function is as follows. Involved in the efflux of sugars. The physiological role may be the reduction of the intracellular concentration of toxic sugars or sugar metabolites. The protein is Probable sugar efflux transporter of Escherichia coli O157:H7.